Here is a 426-residue protein sequence, read N- to C-terminus: Spermatogenesis-associated protein 2-like protein (426 aa).

4 disordered regions span residues A204–A223, D234–L256, L269–E300, and S316–A347. A phosphoserine mark is found at S318 and S326.

It belongs to the SPATA2 family.

The protein is Spermatogenesis-associated protein 2-like protein of Mus musculus (Mouse).